A 138-amino-acid chain; its full sequence is ATP synthase subunit g, mitochondrial (138 aa).

This sequence belongs to the ATPase g subunit family. In terms of assembly, F-type ATP synthases have 2 components, the catalytic core F(1) and the membrane-embedded component F(0), linked together by a central stalk and a peripheral stalk. The central stalk, also called rotor shaft, is often seen as part of F(1). The peripheral stalk is seen as part of F(0). F(0) contains the membrane channel next to the rotor. F-type ATP synthases form dimers but each monomer functions independently in ATP generation. The dimer consists of 17 different polypeptides: ATP1 (subunit alpha, 3 molecules per monomer, part of F(1)), ATP2 (subunit beta, 3 copies per monomer, part of F(1)), ATP3 (subunit gamma, part of the central stalk), ATP4 (subunit b, part of the peripheral stalk), ATP5/OSCP (subunit 5/OSCP, part of the peripheral stalk), ATP6 (subunit a, part of the peripheral stalk), ATP7 (subunit d, part of the peripheral stalk), ATP8 (subunit 8, part of the peripheral stalk), OLI1 (subunit c, part of the rotor, 10 molecules per monomer), ATP14 (subunit h, part of the peripheral stalk), ATP15 (subunit epsilon, part of the central stalk), ATP16 (subunit delta, part of the central stalk), ATP17 (subunit f, part of the peripheral stalk), ATP18 (subunit i/j, part of the peripheral stalk), ATP19 (subunit k, dimer-specific, at interface between monomers), ATP20 (subunit g, at interface between monomers), TIM11 (subunit e, at interface between monomers).

Its subcellular location is the mitochondrion inner membrane. In terms of biological role, mitochondrial membrane ATP synthase (F(1)F(0) ATP synthase or Complex V) produces ATP from ADP in the presence of a proton gradient across the membrane which is generated by electron transport complexes of the respiratory chain. F-type ATP synthases consist of two structural domains, F(1) - containing the extramembraneous catalytic core, and F(0) - containing the membrane proton channel, linked together by a central stalk and a peripheral stalk. During catalysis, ATP synthesis in the catalytic domain of F(1) is coupled via a rotary mechanism of the central stalk subunits to proton translocation. Part of the complex F(0) domain. Minor subunit located with subunit a/ATP6 in the membrane. Together with subunit e/TIM11, probably contributes to membrane curvature at the site of the ATP synthase dimer, ultimately contributing to formation of cristae. The sequence is that of ATP synthase subunit g, mitochondrial from Yarrowia lipolytica (strain CLIB 122 / E 150) (Yeast).